Reading from the N-terminus, the 693-residue chain is Glycine--tRNA ligase beta subunit (693 aa).

It belongs to the class-II aminoacyl-tRNA synthetase family. As to quaternary structure, tetramer of two alpha and two beta subunits.

It is found in the cytoplasm. The enzyme catalyses tRNA(Gly) + glycine + ATP = glycyl-tRNA(Gly) + AMP + diphosphate. The sequence is that of Glycine--tRNA ligase beta subunit from Vibrio campbellii (strain ATCC BAA-1116).